Consider the following 341-residue polypeptide: tRNA N6-adenosine threonylcarbamoyltransferase (341 aa).

Fe cation-binding residues include histidine 111 and histidine 115. Substrate-binding positions include 134 to 138 (LVSGG), aspartate 167, glycine 180, and asparagine 276. Aspartate 304 is a binding site for Fe cation.

It belongs to the KAE1 / TsaD family. It depends on Fe(2+) as a cofactor.

Its subcellular location is the cytoplasm. It carries out the reaction L-threonylcarbamoyladenylate + adenosine(37) in tRNA = N(6)-L-threonylcarbamoyladenosine(37) in tRNA + AMP + H(+). Functionally, required for the formation of a threonylcarbamoyl group on adenosine at position 37 (t(6)A37) in tRNAs that read codons beginning with adenine. Is involved in the transfer of the threonylcarbamoyl moiety of threonylcarbamoyl-AMP (TC-AMP) to the N6 group of A37, together with TsaE and TsaB. TsaD likely plays a direct catalytic role in this reaction. This chain is tRNA N6-adenosine threonylcarbamoyltransferase, found in Pseudomonas putida (strain W619).